The chain runs to 323 residues: DNA-directed RNA polymerase subunit alpha 1 (323 aa).

Positions 1 to 228 (MSNNNSKQEF…EQISVFVSLR (228 aa)) are alpha N-terminal domain (alpha-NTD). The interval 244–323 (IDPILLKPID…DNFRELVEGK (80 aa)) is alpha C-terminal domain (alpha-CTD).

Belongs to the RNA polymerase alpha chain family. As to quaternary structure, homodimer. The RNAP catalytic core consists of 2 alpha, 1 beta, 1 beta' and 1 omega subunit. When a sigma factor is associated with the core the holoenzyme is formed, which can initiate transcription.

The catalysed reaction is RNA(n) + a ribonucleoside 5'-triphosphate = RNA(n+1) + diphosphate. In terms of biological role, DNA-dependent RNA polymerase catalyzes the transcription of DNA into RNA using the four ribonucleoside triphosphates as substrates. The protein is DNA-directed RNA polymerase subunit alpha 1 of Francisella tularensis subsp. novicida (strain U112).